The primary structure comprises 510 residues: Propionyl-CoA carboxylase beta chain (510 aa).

A CoA carboxyltransferase N-terminal domain is found at M1–P257. Residues M1 to K504 are carboxyltransferase. Residues D261–K504 enclose the CoA carboxyltransferase C-terminal domain. The tract at residues D292–Q325 is acyl-CoA binding.

The protein belongs to the AccD/PCCB family. In terms of assembly, the holoenzyme is a dodecamer composed of 6 PccA/alpha subunits and 6 PccB/beta subunits.

It carries out the reaction propanoyl-CoA + hydrogencarbonate + ATP = (S)-methylmalonyl-CoA + ADP + phosphate + H(+). It functions in the pathway metabolic intermediate metabolism; propanoyl-CoA degradation; succinyl-CoA from propanoyl-CoA: step 1/3. In terms of biological role, this is one of the 2 subunits of the biotin-dependent propionyl-CoA carboxylase (PCC), the enzyme catalyzing the carboxylation of propionyl-CoA/propanoyl-CoA to D-methylmalonyl-CoA/(S)-methylmalonyl-CoA. Within the holoenzyme, the alpha subunit catalyzes the ATP-dependent carboxylation of the biotin carried by the biotin carboxyl carrier (BCC) domain, while the beta subunit then tranfers the carboxyl group from carboxylated biotin to propionyl-CoA. This Roseobacter denitrificans (strain ATCC 33942 / OCh 114) (Erythrobacter sp. (strain OCh 114)) protein is Propionyl-CoA carboxylase beta chain.